A 436-amino-acid polypeptide reads, in one-letter code: Antilisterial bacteriocin subtilosin biosynthesis protein AlbD (436 aa).

10 helical membrane-spanning segments follow: residues 27–47 (IAAG…QAGI), 51–71 (VLGK…MVFL), 112–132 (TLFF…SGAQ), 134–154 (LFWL…GVML), 166–186 (FLLH…MPAV), 187–207 (TIPL…PVFL), 240–260 (AMLL…FQMM), 270–290 (IYIV…LYSI), 315–335 (FYSG…GFIS), and 395–415 (ATLA…LIIV).

Its subcellular location is the cell membrane. Involved in the production of the bacteriocin subtilosin. Required for immunity to subtilosin. This Bacillus subtilis protein is Antilisterial bacteriocin subtilosin biosynthesis protein AlbD (albD).